We begin with the raw amino-acid sequence, 77 residues long: Probable [Fe-S]-dependent transcriptional repressor (77 aa).

C54, C59, C62, and C68 together coordinate iron-sulfur cluster.

It belongs to the FeoC family.

Functionally, may function as a transcriptional regulator that controls feoABC expression. This chain is Probable [Fe-S]-dependent transcriptional repressor, found in Proteus mirabilis (strain HI4320).